The chain runs to 30 residues: Cysteine-rich venom protein annuliferin-a (30 aa).

It belongs to the CRISP family. Contains 8 disulfide bonds. As to expression, expressed by the venom gland.

The protein resides in the secreted. Inhibits calcium-activated potassium channels (KCa), voltage-gated potassium channel (Kv), and the calcium release channel/ryanodine receptor (RyR). The chain is Cysteine-rich venom protein annuliferin-a from Naja annulifera (Banded Egyptian cobra).